Consider the following 186-residue polypeptide: Probable nicotinate-nucleotide adenylyltransferase (186 aa).

This sequence belongs to the NadD family.

It carries out the reaction nicotinate beta-D-ribonucleotide + ATP + H(+) = deamido-NAD(+) + diphosphate. It functions in the pathway cofactor biosynthesis; NAD(+) biosynthesis; deamido-NAD(+) from nicotinate D-ribonucleotide: step 1/1. In terms of biological role, catalyzes the reversible adenylation of nicotinate mononucleotide (NaMN) to nicotinic acid adenine dinucleotide (NaAD). The sequence is that of Probable nicotinate-nucleotide adenylyltransferase from Thermus thermophilus (strain ATCC 27634 / DSM 579 / HB8).